Consider the following 349-residue polypeptide: tRNA pseudouridine synthase D (349 aa).

F27 is a binding site for substrate. D80 acts as the Nucleophile in catalysis. N129 contributes to the substrate binding site. The region spanning G155–L303 is the TRUD domain. F329 lines the substrate pocket.

This sequence belongs to the pseudouridine synthase TruD family.

The catalysed reaction is uridine(13) in tRNA = pseudouridine(13) in tRNA. Responsible for synthesis of pseudouridine from uracil-13 in transfer RNAs. This Escherichia fergusonii (strain ATCC 35469 / DSM 13698 / CCUG 18766 / IAM 14443 / JCM 21226 / LMG 7866 / NBRC 102419 / NCTC 12128 / CDC 0568-73) protein is tRNA pseudouridine synthase D.